Consider the following 344-residue polypeptide: Anthranilate phosphoribosyltransferase (344 aa).

5-phospho-alpha-D-ribose 1-diphosphate contacts are provided by residues glycine 80, 83–84 (GD), threonine 88, 90–93 (NVST), 108–116 (KHGNRSVSS), and serine 120. Glycine 80 provides a ligand contact to anthranilate. A Mg(2+)-binding site is contributed by serine 92. Asparagine 111 contributes to the anthranilate binding site. Arginine 166 serves as a coordination point for anthranilate. Mg(2+) is bound by residues aspartate 225 and glutamate 226.

The protein belongs to the anthranilate phosphoribosyltransferase family. In terms of assembly, homodimer. Mg(2+) is required as a cofactor.

The enzyme catalyses N-(5-phospho-beta-D-ribosyl)anthranilate + diphosphate = 5-phospho-alpha-D-ribose 1-diphosphate + anthranilate. The protein operates within amino-acid biosynthesis; L-tryptophan biosynthesis; L-tryptophan from chorismate: step 2/5. Functionally, catalyzes the transfer of the phosphoribosyl group of 5-phosphorylribose-1-pyrophosphate (PRPP) to anthranilate to yield N-(5'-phosphoribosyl)-anthranilate (PRA). In Legionella pneumophila (strain Lens), this protein is Anthranilate phosphoribosyltransferase.